Reading from the N-terminus, the 182-residue chain is Peptidyl-tRNA hydrolase (182 aa).

Position 14 (Tyr-14) interacts with tRNA. The active-site Proton acceptor is His-19. TRNA is bound by residues Phe-60, Asn-62, and Asn-106.

This sequence belongs to the PTH family. In terms of assembly, monomer.

Its subcellular location is the cytoplasm. It catalyses the reaction an N-acyl-L-alpha-aminoacyl-tRNA + H2O = an N-acyl-L-amino acid + a tRNA + H(+). Functionally, hydrolyzes ribosome-free peptidyl-tRNAs (with 1 or more amino acids incorporated), which drop off the ribosome during protein synthesis, or as a result of ribosome stalling. Catalyzes the release of premature peptidyl moieties from peptidyl-tRNA molecules trapped in stalled 50S ribosomal subunits, and thus maintains levels of free tRNAs and 50S ribosomes. The chain is Peptidyl-tRNA hydrolase from Campylobacter concisus (strain 13826).